Here is a 437-residue protein sequence, read N- to C-terminus: Triacylglycerol lipase (437 aa).

Residues 1–100 enclose the PE domain; that stretch reads MVSYVVALPE…AELANASLLQ (100 aa). The segment at 101–206 is linker; the sequence is SEFASGIGNG…GNSPPPLLNS (106 aa). The lipase stretch occupies residues 207–437; sequence LLGQTVQYTT…QINQQLGIAA (231 aa). The Involved in the stabilization of the negatively charged intermediate by the formation of the oxyanion hole signature appears at 239–241; it reads HGG. Active-site residues include S309, D383, and H413.

The protein in the N-terminal section; belongs to the mycobacterial PE family. PGRS subfamily. This sequence in the C-terminal section; belongs to the 'GDXG' lipolytic enzyme family. In terms of assembly, forms aggregates via its PE domain. In terms of processing, upon export, the PE domain is removed by proteolytic cleavage. Cleavage occurs at the cell surface and is not required for secretion. Cleaved after Gly-149 by the aspartic protease PecA. May also be cleaved before Leu-98 and after Ala-136.

It localises to the cytoplasm. The protein resides in the secreted. Its subcellular location is the cell wall. It is found in the cell surface. It catalyses the reaction a triacylglycerol + H2O = a diacylglycerol + a fatty acid + H(+). The enzyme catalyses 1,2,3-tri-(9Z-octadecenoyl)-glycerol + H2O = di-(9Z)-octadecenoylglycerol + (9Z)-octadecenoate + H(+). The catalysed reaction is an acetyl ester + H2O = an aliphatic alcohol + acetate + H(+). It carries out the reaction a butanoate ester + H2O = an aliphatic alcohol + butanoate + H(+). It catalyses the reaction a hexanoate ester + H2O = an aliphatic alcohol + hexanoate + H(+). The enzyme catalyses an octanoate ester + H2O = an aliphatic alcohol + octanoate + H(+). The catalysed reaction is a dodecanoate ester + H2O = an aliphatic alcohol + dodecanoate + H(+). It carries out the reaction a tetradecanoate ester + H2O = an aliphatic alcohol + tetradecanoate + H(+). It catalyses the reaction hexadecanoate ester + H2O = an aliphatic alcohol + hexadecanoate + H(+). The enzyme catalyses octadecanoate ester + H2O = an aliphatic alcohol + octadecanoate + H(+). The catalysed reaction is 1-butyrylglycerol + H2O = butanoate + glycerol + H(+). It carries out the reaction 1,2,3-tributanoylglycerol + H2O = dibutanoylglycerol + butanoate + H(+). PE domain down-regulates lipase activity. With respect to regulation, cleavage by PecA does not affect surface localization and lipase activity. Its activity is regulated as follows. Inhibited by diethyl-p-nitrophenyl phosphate (E-600) at 0.5 uM, by phenylmethanesulfonyl fluoride at 5 mM and by polyethylene glycol sorbitan monolaurate (Tween 20). Also inhibited by CaCl(2), CoCl(2), MnCl(2), ZnCl(2) and MgCl(2). Inhibited by several hydrazides compounds. Stimulated slightly by SDS at concentrations up to 2 mM, above which the activity is severely inhibited. In terms of biological role, catalyzes the hydrolysis of both intracellular and extracellular triacylglycerol (TAG). In vitro, can also hydrolyze p-nitrophenyl (pNP) esters with various chain lengths, including pNP-acetate (C2), pNP-butyrate (C4), pNP-caproate (C6), pNP-caprylate (C8), pNP-laurate (C12), pNP-myristate (C14), pNP-palmitate (C16) and pNP-stearate (C18). Also hydrolyzes monobutyrin, tributyrin and trioctanoin. Overexpression results in increase of virulence characterized by reduced survival of infected mouse and increased burden of bacilli in the lungs. Hydrolyzes internal or host-derived TAG depending on its localization. Its function is as follows. Hydrolyzes TAG that accumulates within mycobacterial intracytosolic lipid inclusions (ILI). Probably responsible for the utilization of stored long-chain TAG during the dormancy and reactivation stages of the pathogen. Hydrolyzes host-derived TAG. The chain is Triacylglycerol lipase from Mycobacterium tuberculosis (strain ATCC 25618 / H37Rv).